The sequence spans 1170 residues: DNA-directed RNA polymerase subunit beta (1170 aa).

It belongs to the RNA polymerase beta chain family. As to quaternary structure, the RNAP catalytic core consists of 2 alpha, 1 beta, 1 beta' and 1 omega subunit. When a sigma factor is associated with the core the holoenzyme is formed, which can initiate transcription.

It catalyses the reaction RNA(n) + a ribonucleoside 5'-triphosphate = RNA(n+1) + diphosphate. In terms of biological role, DNA-dependent RNA polymerase catalyzes the transcription of DNA into RNA using the four ribonucleoside triphosphates as substrates. The protein is DNA-directed RNA polymerase subunit beta of Corynebacterium urealyticum (strain ATCC 43042 / DSM 7109).